A 295-amino-acid chain; its full sequence is Dehydrodolichyl diphosphate synthase 6 (295 aa).

The protein belongs to the UPP synthase family. The cofactor is Mg(2+).

The protein operates within protein modification; protein glycosylation. Its function is as follows. Catalyzes cis-prenyl chain elongation to produce the polyprenyl backbone of dolichol, a glycosyl carrier-lipid required for the biosynthesis of several classes of glycoprotein. The polypeptide is Dehydrodolichyl diphosphate synthase 6 (Arabidopsis thaliana (Mouse-ear cress)).